A 181-amino-acid chain; its full sequence is ATP-dependent protease subunit HslV (181 aa).

Residue T9 is part of the active site. Na(+)-binding residues include A166, C169, and T172.

Belongs to the peptidase T1B family. HslV subfamily. In terms of assembly, a double ring-shaped homohexamer of HslV is capped on each side by a ring-shaped HslU homohexamer. The assembly of the HslU/HslV complex is dependent on binding of ATP.

The protein resides in the cytoplasm. It carries out the reaction ATP-dependent cleavage of peptide bonds with broad specificity.. With respect to regulation, allosterically activated by HslU binding. Functionally, protease subunit of a proteasome-like degradation complex believed to be a general protein degrading machinery. The polypeptide is ATP-dependent protease subunit HslV (Staphylococcus aureus (strain JH1)).